The chain runs to 131 residues: Holo-[acyl-carrier-protein] synthase (131 aa).

Residues D8 and E57 each contribute to the Mg(2+) site.

It belongs to the P-Pant transferase superfamily. AcpS family. Mg(2+) is required as a cofactor.

It localises to the cytoplasm. It catalyses the reaction apo-[ACP] + CoA = holo-[ACP] + adenosine 3',5'-bisphosphate + H(+). In terms of biological role, transfers the 4'-phosphopantetheine moiety from coenzyme A to a Ser of acyl-carrier-protein. This is Holo-[acyl-carrier-protein] synthase from Thiobacillus denitrificans (strain ATCC 25259 / T1).